We begin with the raw amino-acid sequence, 692 residues long: MMPGTGNTPANAWSAPRKLLVTSALPYANGSIHLGHMVEYVQSDIWVRFQKMQGHTVHYVCADDTHGTPIMLRAEKEGITPEELIRRVHAEHYADFSDFLVAFDNYYSTNSEENRELASQIYRALKANGKIATRTIEQYYDPVKHMFLPDRFIKGECPKCHAKDQYGDSCESCGTTYSPTELIAPYSAVSGAAPVRKETEHYFFKLSECEDFLRQWTRSGTLQPEAANKMGEWFASGLSDWDISRDAPYFGFEIPDAPGKYFYVWLDAPIGYMASFKDLATREGLDFDEYWKPDSQAELYHFIGKDILYFHALFWPATLKFSGYRQPTKVFAHGFLTVNGEKMSKSRGTFITARSYLDHVKNPEYLRYYYAAKLNGSMEDIDLNLEDFVARVNSDLVGKYVNIASRTAGFIAKRFDGKLGTVGENAVIAELRAAADSIRESFENRDTARAVRDIMALADKANAYVAEHAPWDMAKQPEQTAALHAVCSVALEMFRLLTLYLKPVLPGLAQAVEKFLKIDPLTWADIDRPLPAGHQIQAYQHLITRIDPKHVEAMVEANKESLQTHAAVVPEQKQVASEATPESVYISIDDFAKVDLRIARIANAEHVEGAEKLLRLSLDIGEERPRQVFAGIKSAYDPESLKGRLTVMVANLAPRKMKFGLSEGMVLAASDERGGPFILSPDSGAQPGMRVK.

Positions 26–36 (PYANGSIHLGH) match the 'HIGH' region motif. Residues cysteine 157, cysteine 160, cysteine 170, and cysteine 173 each coordinate Zn(2+). The short motif at 342–346 (KMSKS) is the 'KMSKS' region element. Lysine 345 contacts ATP. One can recognise a tRNA-binding domain in the interval 590 to 692 (DFAKVDLRIA…SGAQPGMRVK (103 aa)).

Belongs to the class-I aminoacyl-tRNA synthetase family. MetG type 1 subfamily. In terms of assembly, homodimer. Zn(2+) serves as cofactor.

It localises to the cytoplasm. The enzyme catalyses tRNA(Met) + L-methionine + ATP = L-methionyl-tRNA(Met) + AMP + diphosphate. Functionally, is required not only for elongation of protein synthesis but also for the initiation of all mRNA translation through initiator tRNA(fMet) aminoacylation. This is Methionine--tRNA ligase from Methylobacillus flagellatus (strain ATCC 51484 / DSM 6875 / VKM B-1610 / KT).